A 197-amino-acid polypeptide reads, in one-letter code: dTTP/UTP pyrophosphatase (197 aa).

The Proton acceptor role is filled by Asp-70.

Belongs to the Maf family. YhdE subfamily. It depends on a divalent metal cation as a cofactor.

It is found in the cytoplasm. It carries out the reaction dTTP + H2O = dTMP + diphosphate + H(+). It catalyses the reaction UTP + H2O = UMP + diphosphate + H(+). Functionally, nucleoside triphosphate pyrophosphatase that hydrolyzes dTTP and UTP. May have a dual role in cell division arrest and in preventing the incorporation of modified nucleotides into cellular nucleic acids. The polypeptide is dTTP/UTP pyrophosphatase (Methanosarcina mazei (strain ATCC BAA-159 / DSM 3647 / Goe1 / Go1 / JCM 11833 / OCM 88) (Methanosarcina frisia)).